Here is a 500-residue protein sequence, read N- to C-terminus: Lysine--tRNA ligase (500 aa).

Glu-410 and Glu-417 together coordinate Mg(2+).

It belongs to the class-II aminoacyl-tRNA synthetase family. Homodimer. Requires Mg(2+) as cofactor.

The protein localises to the cytoplasm. The catalysed reaction is tRNA(Lys) + L-lysine + ATP = L-lysyl-tRNA(Lys) + AMP + diphosphate. In Pseudomonas savastanoi pv. phaseolicola (strain 1448A / Race 6) (Pseudomonas syringae pv. phaseolicola (strain 1448A / Race 6)), this protein is Lysine--tRNA ligase.